The sequence spans 71 residues: Beta-defensin 25 (71 aa).

The first 22 residues, 1–22 (MAKWILLIVALLVLSHVPPGST), serve as a signal peptide directing secretion. 3 disulfide bridges follow: Cys-27–Cys-54, Cys-34–Cys-48, and Cys-38–Cys-55.

The protein belongs to the beta-defensin family.

It localises to the secreted. Has antibacterial activity. The chain is Beta-defensin 25 (Defb25) from Mus musculus (Mouse).